Here is a 237-residue protein sequence, read N- to C-terminus: Ribosomal RNA small subunit methyltransferase G (237 aa).

S-adenosyl-L-methionine-binding positions include Gly78, Phe83, 129–130 (AE), and Arg148.

Belongs to the methyltransferase superfamily. RNA methyltransferase RsmG family.

The protein resides in the cytoplasm. In terms of biological role, specifically methylates the N7 position of a guanine in 16S rRNA. This chain is Ribosomal RNA small subunit methyltransferase G, found in Streptococcus pyogenes serotype M2 (strain MGAS10270).